Reading from the N-terminus, the 158-residue chain is Transcription elongation factor GreA (158 aa).

It belongs to the GreA/GreB family.

In terms of biological role, necessary for efficient RNA polymerase transcription elongation past template-encoded arresting sites. The arresting sites in DNA have the property of trapping a certain fraction of elongating RNA polymerases that pass through, resulting in locked ternary complexes. Cleavage of the nascent transcript by cleavage factors such as GreA or GreB allows the resumption of elongation from the new 3'terminus. GreA releases sequences of 2 to 3 nucleotides. In Psychrobacter sp. (strain PRwf-1), this protein is Transcription elongation factor GreA.